Consider the following 232-residue polypeptide: Ras-related protein RabP (232 aa).

A GTP-binding site is contributed by 15-22; that stretch reads GNYGVGKS. Positions 35-40 match the Effector region motif; that stretch reads DNTTGF. GTP contacts are provided by residues 58-62 and 118-121; these read DTSGQ and NKFD. Residues C229 and C230 are each lipidated (S-geranylgeranyl cysteine).

Belongs to the small GTPase superfamily. Rab family.

The protein localises to the cell membrane. The sequence is that of Ras-related protein RabP (rabP) from Dictyostelium discoideum (Social amoeba).